The primary structure comprises 185 residues: Elongation factor P (185 aa).

It belongs to the elongation factor P family.

The protein localises to the cytoplasm. It participates in protein biosynthesis; polypeptide chain elongation. Functionally, involved in peptide bond synthesis. Stimulates efficient translation and peptide-bond synthesis on native or reconstituted 70S ribosomes in vitro. Probably functions indirectly by altering the affinity of the ribosome for aminoacyl-tRNA, thus increasing their reactivity as acceptors for peptidyl transferase. The chain is Elongation factor P from Nostoc punctiforme (strain ATCC 29133 / PCC 73102).